Here is a 433-residue protein sequence, read N- to C-terminus: Glutamate--tRNA ligase 1 (433 aa).

The 'HIGH' region motif lies at 7-17 (PSPTGLIHLGN). The 'KMSKS' region motif lies at 230–234 (KMSKR). Residue Lys233 participates in ATP binding.

This sequence belongs to the class-I aminoacyl-tRNA synthetase family. Glutamate--tRNA ligase type 1 subfamily. As to quaternary structure, monomer.

It localises to the cytoplasm. It carries out the reaction tRNA(Glu) + L-glutamate + ATP = L-glutamyl-tRNA(Glu) + AMP + diphosphate. Catalyzes the attachment of glutamate to tRNA(Glu) in a two-step reaction: glutamate is first activated by ATP to form Glu-AMP and then transferred to the acceptor end of tRNA(Glu). The polypeptide is Glutamate--tRNA ligase 1 (Neorickettsia sennetsu (strain ATCC VR-367 / Miyayama) (Ehrlichia sennetsu)).